Reading from the N-terminus, the 414-residue chain is Zinc metalloproteinase nas-26 (414 aa).

The signal sequence occupies residues M1–A20. Residues A21–R61 constitute a propeptide that is removed on maturation. N24 is a glycosylation site (N-linked (GlcNAc...) asparagine). The 203-residue stretch at E62 to P264 folds into the Peptidase M12A domain. 6 disulfides stabilise this stretch: C103-C263, C126-C146, C267-C286, C289-C300, C308-C331, and C358-C378. H154 contacts Zn(2+). E155 is a catalytic residue. 2 residues coordinate Zn(2+): H158 and H164. In terms of domain architecture, EGF-like spans A251 to P307. Residues C308–A414 enclose the CUB domain.

Zn(2+) serves as cofactor.

The protein resides in the secreted. Its function is as follows. Metalloprotease. The chain is Zinc metalloproteinase nas-26 (toh-1) from Caenorhabditis elegans.